The primary structure comprises 90 residues: Sec-independent protein translocase protein TatA (90 aa).

A helical transmembrane segment spans residues 1–21; that stretch reads MGISPWTLLIVLLIVLLVFGT. Composition is skewed to basic and acidic residues over residues 42–59 and 70–90; these read MKEGEEGAKEGEKSEPSK and SGEGHTIEGERSEQPRDRHSS. The disordered stretch occupies residues 42–90; it reads MKEGEEGAKEGEKSEPSKLEQPPEEEKESGEGHTIEGERSEQPRDRHSS.

Belongs to the TatA/E family. As to quaternary structure, the Tat system comprises two distinct complexes: a TatABC complex, containing multiple copies of TatA, TatB and TatC subunits, and a separate TatA complex, containing only TatA subunits. Substrates initially bind to the TatABC complex, which probably triggers association of the separate TatA complex to form the active translocon.

It is found in the cell inner membrane. Its function is as follows. Part of the twin-arginine translocation (Tat) system that transports large folded proteins containing a characteristic twin-arginine motif in their signal peptide across membranes. TatA could form the protein-conducting channel of the Tat system. The chain is Sec-independent protein translocase protein TatA from Alkalilimnicola ehrlichii (strain ATCC BAA-1101 / DSM 17681 / MLHE-1).